Reading from the N-terminus, the 572-residue chain is Proline--tRNA ligase (572 aa).

The protein belongs to the class-II aminoacyl-tRNA synthetase family. ProS type 1 subfamily. In terms of assembly, homodimer.

The protein resides in the cytoplasm. It catalyses the reaction tRNA(Pro) + L-proline + ATP = L-prolyl-tRNA(Pro) + AMP + diphosphate. Functionally, catalyzes the attachment of proline to tRNA(Pro) in a two-step reaction: proline is first activated by ATP to form Pro-AMP and then transferred to the acceptor end of tRNA(Pro). As ProRS can inadvertently accommodate and process non-cognate amino acids such as alanine and cysteine, to avoid such errors it has two additional distinct editing activities against alanine. One activity is designated as 'pretransfer' editing and involves the tRNA(Pro)-independent hydrolysis of activated Ala-AMP. The other activity is designated 'posttransfer' editing and involves deacylation of mischarged Ala-tRNA(Pro). The misacylated Cys-tRNA(Pro) is not edited by ProRS. The polypeptide is Proline--tRNA ligase (Salmonella arizonae (strain ATCC BAA-731 / CDC346-86 / RSK2980)).